We begin with the raw amino-acid sequence, 138 residues long: Nucleoside diphosphate kinase (138 aa).

Residues Lys-9, Phe-57, Arg-85, Thr-91, Arg-102, and Asn-112 each coordinate ATP. His-115 (pros-phosphohistidine intermediate) is an active-site residue.

This sequence belongs to the NDK family. In terms of assembly, homotetramer. Mg(2+) serves as cofactor.

It is found in the cytoplasm. The catalysed reaction is a 2'-deoxyribonucleoside 5'-diphosphate + ATP = a 2'-deoxyribonucleoside 5'-triphosphate + ADP. It catalyses the reaction a ribonucleoside 5'-diphosphate + ATP = a ribonucleoside 5'-triphosphate + ADP. Functionally, major role in the synthesis of nucleoside triphosphates other than ATP. The ATP gamma phosphate is transferred to the NDP beta phosphate via a ping-pong mechanism, using a phosphorylated active-site intermediate. The chain is Nucleoside diphosphate kinase from Trichlorobacter lovleyi (strain ATCC BAA-1151 / DSM 17278 / SZ) (Geobacter lovleyi).